The sequence spans 99 residues: Integration host factor subunit alpha (99 aa).

Positions 49–71 are disordered; it reads FGNFDLRDKNQRPGRNPKTGEDI.

It belongs to the bacterial histone-like protein family. Heterodimer of an alpha and a beta chain.

Functionally, this protein is one of the two subunits of integration host factor, a specific DNA-binding protein that functions in genetic recombination as well as in transcriptional and translational control. The sequence is that of Integration host factor subunit alpha from Shewanella frigidimarina (strain NCIMB 400).